The sequence spans 1267 residues: MLVGQGAGLLGPAVVTAAVVLLLSGVGPAHGSEDIVVGCGGFVKSDVEINYSLIEIKLYTKHGTLKYQTDCAPNNGYFMIPLYDKGDFILKIEPPLGWSFEPTTVELHVDGVSDICTKGGDINFVFTGFSVNGKVLSKGQPLGPAGVQVSLRNTGTEAKIQSTVTQPGGKFAFFKVLPGDYEILATHPTWALKEASTTVRVTNSNANAASPLIVAGYNVSGSVRSDGEPMKGVKFLLFSSLVTKEDVLGCNVSPVPGFQPQDESLVYLCYTVSREDGSFSFYSLPSGGYTVIPFYRGERITFDVAPSRLDFTVEHDSLKIEPVFHVMGFSVTGRVLNGPEGDGVPEAVVTLNNQIKVKTKADGSFRLENITTGTYTIHAQKEHLYFETVTIKIAPNTPQLADIVATGFSVCGRISIIRFPDTVKQMNKYKVVLSSQDKDKSLVTVETDAHGSFCFKAKPGTYKVQVMVPEAETRAGLTLKPQTFPLTVTDRPVMDVAFVQFLASVSGKVSCLDTCGDLLVTLQSLSRQGEKRSLQLSGKVNAMTFTFDNVLPGKYKISIMHEDWCWKNKSLEVEVLEDDVSAVEFRQTGYMLRCSLSHAITLEFYQDGNGRENVGIYNLSKGVNRFCLSKPGVYKVTPRSCHRFEQAFYTYDTSSPSILTLTAIRHHVLGTITTDKMMDVTVTIKSSIDSEPALVLGPLKSVQELRREQQLAEIEARRQEREKNGNEEGEERMTKPPVQEMVDELQGPFSYDFSYWARSGEKITVTPSSKELLFYPPSMEAVVSGESCPGKLIEIHGKAGLFLEGQIHPELEGVEIVISEKGASSPLITVFTDDKGAYSVGPLHSDLEYTVTSQKEGYVLTAVEGTIGDFKAYALAGVSFEIKAEDDQPLPGVLLSLSGGLFRSNLLTQDNGILTFSNLSPGQYYFKPMMKEFRFEPSSQMIEVQEGQNLKITITGYRTAYSCYGTVSSLNGEPEQGVAMEAVGQNDCSIYGEDTVTDEEGKFRLRGLLPGCVYHVQLKAEGNDHIERALPHHRVIEVGNNDIDDVNIIVFRQINQFDLSGNVITSSEYLPTLWVKLYKSENLDNPIQTVSLGQSLFFHFPPLLRDGENYVVLLDSTLPRSQYDYILPQVSFTAVGYHKHITLIFNPTRKLPEQDIAQGSYIALPLTLLVLLAGYNHDKLIPLLLQLTSRLQGVGALGQAASDNSGPEDAKRQAKKQKTRRTLRLQEEFQLMWCLVPWRGTLGIHLFSSLPFASEILLETTATCIHY.

The signal sequence occupies residues 1–31; the sequence is MLVGQGAGLLGPAVVTAAVVLLLSGVGPAHG. Residues 32-1155 lie on the Lumenal side of the membrane; sequence SEDIVVGCGG…NPTRKLPEQD (1124 aa). N-linked (GlcNAc...) asparagine glycans are attached at residues Asn50, Asn218, and Asn618. Residues 1156–1176 traverse the membrane as a helical segment; that stretch reads IAQGSYIALPLTLLVLLAGYN. Topologically, residues 1177–1267 are cytoplasmic; the sequence is HDKLIPLLLQ…LETTATCIHY (91 aa). The segment at 1198-1219 is disordered; that stretch reads GQAASDNSGPEDAKRQAKKQKT.

Component of the back of Sec61 (BOS) complex, composed of NCLN/Nicalin, NOMO (NOMO1, NOMO2 or NOMO3) and TMEM147. The BOS complex is part of the multi-pass translocon (MPT) complex, composed of three subcomplexes, the GEL complex (composed of RAB5IF/OPTI and TMCO1), the BOS complex (composed of NCLN/Nicalin, NOMO and TMEM147) and the PAT complex (composed of WDR83OS/Asterix and CCDC47). The MPT complex associates with the SEC61 complex. Due to the strong similarity between NOMO1, NOMO2 and NOMO3, similar interaction pattern probably occur for the three gene copies. In terms of tissue distribution, highly expressed in pancreas and skeletal muscle and, at lower levels, in heart.

The protein resides in the endoplasmic reticulum membrane. Its function is as follows. Component of the multi-pass translocon (MPT) complex that mediates insertion of multi-pass membrane proteins into the lipid bilayer of membranes. The MPT complex takes over after the SEC61 complex: following membrane insertion of the first few transmembrane segments of proteins by the SEC61 complex, the MPT complex occludes the lateral gate of the SEC61 complex to promote insertion of subsequent transmembrane regions. The protein is BOS complex subunit NOMO2 (NOMO2) of Homo sapiens (Human).